The chain runs to 423 residues: Histidine--tRNA ligase (423 aa).

This sequence belongs to the class-II aminoacyl-tRNA synthetase family. Homodimer.

Its subcellular location is the cytoplasm. The catalysed reaction is tRNA(His) + L-histidine + ATP = L-histidyl-tRNA(His) + AMP + diphosphate + H(+). This Rhodococcus opacus (strain B4) protein is Histidine--tRNA ligase.